We begin with the raw amino-acid sequence, 293 residues long: uncharacterized protein (293 aa).

2 disordered regions span residues 1–114 (MFLR…IPKL) and 268–293 (EETADWESEGQEREAKEQREGPGRML). S34, S35, and S89 each carry phosphoserine. Composition is skewed to basic and acidic residues over residues 73 to 95 (SSRDLKVDQLGSKRMDSLKRDKT) and 277 to 293 (GQEREAKEQREGPGRML).

This is an uncharacterized protein from Mus musculus (Mouse).